Here is a 152-residue protein sequence, read N- to C-terminus: Small ribosomal subunit protein uS15 (152 aa).

Belongs to the universal ribosomal protein uS15 family. In terms of assembly, part of the 30S ribosomal subunit.

This is Small ribosomal subunit protein uS15 from Methanocorpusculum labreanum (strain ATCC 43576 / DSM 4855 / Z).